An 84-amino-acid polypeptide reads, in one-letter code: Small ribosomal subunit protein uS17 (84 aa).

This sequence belongs to the universal ribosomal protein uS17 family. As to quaternary structure, part of the 30S ribosomal subunit.

Functionally, one of the primary rRNA binding proteins, it binds specifically to the 5'-end of 16S ribosomal RNA. The sequence is that of Small ribosomal subunit protein uS17 from Clostridioides difficile (strain 630) (Peptoclostridium difficile).